The sequence spans 314 residues: MTERNKTVISQFLLLGLPIPPEHQQLFYALFLVMYLTTVLGNLIIIILIILDSHLHTPMYLFLSNLSFSDLCFSSVTMPKLLQNMQSQVPSIPYAGCLAQIYFFLFFGDLGNFLLVAMAYDRYVAICYPLHYTTIMSPRLCVSLVVLSWVLTTFHAMLHTLLMARLSFCEDNVIPHYFCDMSALLKLACSDTRVNEVVIFIVASIFLVLPFALITMSYVRIVSSILKVPSSQGIYKAFSTCGSHLSVVSLFYGTVIGLYLSPSSNNSTVKDTVMSLMYTVVTPMLNPFIYSLRNRDIKGALERVFCKRKIQLNL.

At Met1–Ala29 the chain is on the extracellular side. A glycan (N-linked (GlcNAc...) asparagine) is linked at Asn5. The chain crosses the membrane as a helical span at residues Leu30–Ile50. Residues Leu51 to Thr57 lie on the Cytoplasmic side of the membrane. The chain crosses the membrane as a helical span at residues Pro58 to Met78. Topologically, residues Pro79 to Cys97 are extracellular. Cysteines 97 and 179 form a disulfide. A helical membrane pass occupies residues Leu98–Met118. Residues Ala119–Ser143 lie on the Cytoplasmic side of the membrane. The helical transmembrane segment at Leu144 to Ala164 threads the bilayer. Over Arg165–Glu196 the chain is Extracellular. Residues Val197–Ser217 form a helical membrane-spanning segment. The Cytoplasmic segment spans residues Tyr218–Ser239. A helical membrane pass occupies residues Thr240–Leu260. Topologically, residues Ser261–Asp271 are extracellular. N-linked (GlcNAc...) asparagine glycosylation is found at Asn265 and Asn266. A helical membrane pass occupies residues Thr272 to Leu292. At Arg293 to Leu314 the chain is on the cytoplasmic side.

It belongs to the G-protein coupled receptor 1 family. As to expression, olfactory epithelium.

Its subcellular location is the cell membrane. Functionally, odorant receptor. Activated by a lily-derived aldehyde as well as other odorants. May signal through an inositol 1,4,5-trisphosphate (IP3) second messenger system. The protein is Olfactory receptor 1E16 of Mus musculus (Mouse).